Reading from the N-terminus, the 659-residue chain is Serine/threonine-protein kinase StkP (659 aa).

Topologically, residues Met1 to Lys342 are cytoplasmic. The Protein kinase domain occupies Tyr12–Leu273. Residues Ile18–Val26 and Lys42 contribute to the ATP site. The Proton acceptor role is filled by Asp136. Residues Met343–Leu363 form a helical membrane-spanning segment. Topologically, residues Ser364–Pro659 are extracellular. PASTA domains lie at Thr366–Ser433, Gly434–Lys505, Lys506–Lys577, and Lys578–Lys651. Residues Glu541–Thr561 are disordered.

This sequence belongs to the protein kinase superfamily. Ser/Thr protein kinase family. In terms of assembly, homodimer. StkP forms dimers through its transmembrane and extracellular domains. Dimer formation likely promotes autophosphorylation activity and might be necessary for targeting StkP substrate. Autophosphorylation occurs predominantly at the threonine residue and weakly at the serine residue. Dephosphorylated by PhpP.

It localises to the cell membrane. The catalysed reaction is L-seryl-[protein] + ATP = O-phospho-L-seryl-[protein] + ADP + H(+). It catalyses the reaction L-threonyl-[protein] + ATP = O-phospho-L-threonyl-[protein] + ADP + H(+). In terms of biological role, protein kinase involved in signal transduction pathways that regulate various cellular processes. Likely senses intracellular peptidoglycan subunits present in the cell division septa of actively growing cells; thus, intracellular unlinked peptidoglycan may serve as the signal molecules that trigger StkP phosphorylation activity on a set of substrates. Plays a crucial role in the regulation of cell shape and cell division of S.pneumoniae through control of at least DivIVA activity. Is involved in competence triggering, and is required for the expression of the central competence operon comCDE. StkP also plays an important role for bacterial survival in vivo. Identified target substrates that are specifically phosphorylated by StkP in vivo, mainly on threonine residues, are DivIVA, GlmM, PpaC, MapZ, KhpB (also called EloR/Jag, shown in strains R6 and Rx1) and StkP itself. Autophosphorylated StkP is a substrate for the cotranscribed protein phosphatase PhpP (shown in the avirulent strain Rx / Cp1015); PhpP and StkP appear to constitute a functional signaling couple in vivo. This is Serine/threonine-protein kinase StkP (stkP) from Streptococcus pneumoniae serotype 2 (strain D39 / NCTC 7466).